A 243-amino-acid chain; its full sequence is Leucinostatins biosynthesis cluster protein S (243 aa).

Part of the gene cluster that mediates the biosynthesis of the lipopeptide antibiotics leucinostatins that show extensive biological activities, including antimalarial, antiviral, antibacterial, antifungal, and antitumor activities, as well as phytotoxic. The function of lcsS within the leucinostatins biosynthesis has not been identified yet. This Purpureocillium lilacinum (Paecilomyces lilacinus) protein is Leucinostatins biosynthesis cluster protein S.